A 305-amino-acid polypeptide reads, in one-letter code: Mas-related G-protein coupled receptor member A8 (305 aa).

The Extracellular portion of the chain corresponds to 1–17 (MDKTILGSIDIETLIRH). Residues 18–38 (LMIIIFGLVGLTGNAIVFWLL) form a helical membrane-spanning segment. Residues 39-46 (GFHLHRNA) lie on the Cytoplasmic side of the membrane. A helical transmembrane segment spans residues 47–67 (FLVYILNLALADFFYLLCHII). Residues 68 to 85 (NSIMFLLKVPSPNIILDH) lie on the Extracellular side of the membrane. A helical membrane pass occupies residues 86-106 (CFYTIMIVLYITGLSMLSAIS). Topologically, residues 107–129 (TERCLSVLCPIWYRCHRPEHTST) are cytoplasmic. A helical membrane pass occupies residues 130–150 (AMCAVIWVMSLLISILNGYFC). Residues asparagine 151 and asparagine 159 are each glycosylated (N-linked (GlcNAc...) asparagine). Residues 151–172 (NFSSPKYVNNSVCQASDIFIRT) are Extracellular-facing. Residues 173–193 (YPIFLFVLLCLSTLALLARLF) traverse the membrane as a helical segment. Topologically, residues 194-207 (SGAGKRKFTRLFVT) are cytoplasmic. The helical transmembrane segment at 208-228 (IMLAILVFLLCGLPLGFFWFL) threads the bilayer. Residues 229 to 243 (SPWIEDRFIVLDYRL) lie on the Extracellular side of the membrane. The chain crosses the membrane as a helical span at residues 244–264 (FFASVVLTVVNSCANPIIYFF). Over 265-305 (VGSFRHRLKQQTLKMFLQRALQDTPETPENMVEMSRSKAEP) the chain is Cytoplasmic.

Belongs to the G-protein coupled receptor 1 family. Mas subfamily. In terms of tissue distribution, expressed in a subset of sensory neurons that includes nociceptors. Expressed in the subclass of non-peptidergic sensory neurons that are IB4(+) and VR1(-).

It localises to the cell membrane. Functionally, orphan receptor. May be a receptor for RFamide-family neuropeptides such as NPFF and NPAF, which are analgesic in vivo. May regulate nociceptor function and/or development, including the sensation or modulation of pain. The chain is Mas-related G-protein coupled receptor member A8 (Mrgpra8) from Mus musculus (Mouse).